The primary structure comprises 303 residues: MAAVHDLEMESMNLNMGREMKEELEEEEKMREDGGGKDRAKSKKVHRIVSKWMLPEKSRGTYLERANCFPPPVFIISISLAELAVFIYYAVWKPQKQWITLDTGILESPFIYSPEKREEAWRFISYMLVHAGVQHILGNLCMQLVLGIPLEMVHKGLRVGLVYLAGVIAGSLASSIFDPLRYLVGASGGVYALMGGYFMNVLVNFQEMIPAFGIFRLLIIILIIVLDMGFALYRRFFVPEDGSPVSFAAHIAGGFAGMSIGYTVFSCFDKALLKDPRFWIAIAAYLACVLFAVFFNIFLSPAN.

Residues 20-39 (MKEELEEEEKMREDGGGKDR) are disordered. Over residues 28-39 (EKMREDGGGKDR) the composition is skewed to basic and acidic residues. 7 helical membrane passes run 72 to 92 (PVFI…YAVW), 128 to 148 (LVHA…VLGI), 159 to 179 (VGLV…IFDP), 183 to 203 (LVGA…NVLV), 212 to 232 (FGIF…GFAL), 245 to 265 (VSFA…YTVF), and 278 to 298 (FWIA…FNIF). The active-site Nucleophile is Ser187. His250 is an active-site residue.

It belongs to the peptidase S54 family. Post-translationally, proteolytic processing of the proenzyme produces a N-terminal fragment (NTF) and a C-terminal fragment (CTF). The processing is required for activation of the protease.

Its subcellular location is the cell membrane. The enzyme catalyses Cleaves type-1 transmembrane domains using a catalytic dyad composed of serine and histidine that are contributed by different transmembrane domains.. Functionally, involved in regulated intramembrane proteolysis and the subsequent release of functional polypeptides from their membrane anchors. Known substrate: EFNB3. This Homo sapiens (Human) protein is Rhomboid-related protein 2 (RHBDL2).